A 99-amino-acid polypeptide reads, in one-letter code: Ribosomal processing cysteine protease Prp (99 aa).

Catalysis depends on His16, which acts as the Proton donor. Residue Cys28 is the Nucleophile of the active site.

It belongs to the Prp family. Homodimer.

An essential cysteine protease that cleaves the N-terminus from ribosomal protein bL27. This Mycoplasma genitalium (strain ATCC 33530 / DSM 19775 / NCTC 10195 / G37) (Mycoplasmoides genitalium) protein is Ribosomal processing cysteine protease Prp.